Consider the following 199-residue polypeptide: Inner membrane protein E199L (199 aa).

N131 carries N-linked (GlcNAc...) asparagine; by host glycosylation. A helical membrane pass occupies residues 150–170 (INVMNHPFLTLILIILILVII).

It belongs to the asfivirus E199L family. In terms of assembly, interacts with host PYCR2; this interaction results in autophagy activation. In terms of processing, contains intramolecular disulfide bonds.

The protein resides in the virion membrane. The protein localises to the host membrane. Essential for viral fusion with host endosomal membrane and core release. Not required for virus morphogenesis and egress. Induces complete autophagy through the interaction with and down-regulation of host PYCR2. The polypeptide is Inner membrane protein E199L (African swine fever virus (isolate Tick/Malawi/Lil 20-1/1983) (ASFV)).